We begin with the raw amino-acid sequence, 83 residues long: DNA-directed RNA polymerase subunit Rpo5 (83 aa).

This sequence belongs to the archaeal Rpo5/eukaryotic RPB5 RNA polymerase subunit family. Part of the RNA polymerase complex.

It is found in the cytoplasm. The catalysed reaction is RNA(n) + a ribonucleoside 5'-triphosphate = RNA(n+1) + diphosphate. Its function is as follows. DNA-dependent RNA polymerase (RNAP) catalyzes the transcription of DNA into RNA using the four ribonucleoside triphosphates as substrates. This Metallosphaera sedula (strain ATCC 51363 / DSM 5348 / JCM 9185 / NBRC 15509 / TH2) protein is DNA-directed RNA polymerase subunit Rpo5.